The following is a 234-amino-acid chain: Orotidine 5'-phosphate decarboxylase (234 aa).

Residues Asp10, Lys31, 58–67 (DLKLHDIPNT), Thr121, Arg183, Gln192, Gly212, and Arg213 each bind substrate. The active-site Proton donor is Lys60.

The protein belongs to the OMP decarboxylase family. Type 1 subfamily. In terms of assembly, homodimer.

It catalyses the reaction orotidine 5'-phosphate + H(+) = UMP + CO2. It participates in pyrimidine metabolism; UMP biosynthesis via de novo pathway; UMP from orotate: step 2/2. In terms of biological role, catalyzes the decarboxylation of orotidine 5'-monophosphate (OMP) to uridine 5'-monophosphate (UMP). This chain is Orotidine 5'-phosphate decarboxylase, found in Lysinibacillus sphaericus (strain C3-41).